The chain runs to 953 residues: Coatomer subunit beta (953 aa).

Residue Thr2 is modified to N-acetylthreonine. HEAT repeat units follow at residues 96–131 (HEMI…KEAE), 132–168 (LLEP…NFEH), 240–276 (SERA…SAPT), 277–314 (AIKA…HPAH), 316–353 (RVLQ…SRNV), and 396–433 (DMAA…RFDN). Lys494 carries the N6-acetyllysine modification.

In terms of assembly, oligomeric complex that consists of at least the alpha, beta, beta', gamma, delta, epsilon and zeta subunits. Interacts with SCYL1. Interacts with COPG1. Interacts (via trunk domain) with ARF1 (via switch I region); the interaction is direct. Interacts with KCNK2/TREK (via N-terminus); this interaction increases the channel-mediated whole cell currents and promotes plasma membrane expression of KCNK2/TREK. Interacts with anthrax lethal factor (LF); this interaction may facilitate endosomal vesicle membrane translocation of LF and its release from the lumen of endosomal vesicles to external milieu. Interacts with CAPN8 and PRKCE. Interacts with ARF1 (myristoylated); this interaction is required for binding of COPB1 to Golgi membranes. Interacts with STX17. Interacts with TMEM115. Interacts with HLA-G-B2M complex; this interaction mediates the endoplasmic reticulum (ER) retrieval of HLA-E-B2M complexes that bind low affinity peptides. Interacts with TMEM41B. (Microbial infection) Interacts (via C-terminus) with HIV-1 Nef; the interaction is direct. Proteolytically cleaved between Ser-528 and Ser-529 by CAPN8.

It localises to the cytoplasm. It is found in the golgi apparatus membrane. The protein localises to the cytoplasmic vesicle. Its subcellular location is the COPI-coated vesicle membrane. The protein resides in the cell membrane. It localises to the endoplasmic reticulum-Golgi intermediate compartment. The coatomer is a cytosolic protein complex that binds to dilysine motifs and reversibly associates with Golgi non-clathrin-coated vesicles, which further mediate biosynthetic protein transport from the ER, via the Golgi up to the trans Golgi network. Coatomer complex is required for budding from Golgi membranes, and is essential for the retrograde Golgi-to-ER transport of dilysine-tagged proteins. In mammals, the coatomer can only be recruited by membranes associated to ADP-ribosylation factors (ARFs), which are small GTP-binding proteins; the complex also influences the Golgi structural integrity, as well as the processing, activity, and endocytic recycling of LDL receptors. Plays a functional role in facilitating the transport of kappa-type opioid receptor mRNAs into axons and enhances translation of these proteins. Required for limiting lipid storage in lipid droplets. Involved in lipid homeostasis by regulating the presence of perilipin family members PLIN2 and PLIN3 at the lipid droplet surface and promoting the association of adipocyte surface triglyceride lipase (PNPLA2) with the lipid droplet to mediate lipolysis. Involved in the Golgi disassembly and reassembly processes during cell cycle. Involved in autophagy by playing a role in early endosome function. Plays a role in organellar compartmentalization of secretory compartments including endoplasmic reticulum (ER)-Golgi intermediate compartment (ERGIC), Golgi, trans-Golgi network (TGN) and recycling endosomes, and in biosynthetic transport of CAV1. Promotes degradation of Nef cellular targets CD4 and MHC class I antigens by facilitating their trafficking to degradative compartments. The sequence is that of Coatomer subunit beta from Homo sapiens (Human).